A 197-amino-acid polypeptide reads, in one-letter code: ATP-dependent Clp protease proteolytic subunit (197 aa).

The active-site Nucleophile is the Ser-102. His-127 is a catalytic residue.

This sequence belongs to the peptidase S14 family. In terms of assembly, fourteen ClpP subunits assemble into 2 heptameric rings which stack back to back to give a disk-like structure with a central cavity, resembling the structure of eukaryotic proteasomes.

The protein localises to the cytoplasm. It catalyses the reaction Hydrolysis of proteins to small peptides in the presence of ATP and magnesium. alpha-casein is the usual test substrate. In the absence of ATP, only oligopeptides shorter than five residues are hydrolyzed (such as succinyl-Leu-Tyr-|-NHMec, and Leu-Tyr-Leu-|-Tyr-Trp, in which cleavage of the -Tyr-|-Leu- and -Tyr-|-Trp bonds also occurs).. Cleaves peptides in various proteins in a process that requires ATP hydrolysis. Has a chymotrypsin-like activity. Plays a major role in the degradation of misfolded proteins. The sequence is that of ATP-dependent Clp protease proteolytic subunit from Borreliella afzelii (strain PKo) (Borrelia afzelii).